The following is a 426-amino-acid chain: Serine--tRNA ligase (426 aa).

L-serine is bound at residue 230-232 (TSE). 261 to 263 (RSE) contributes to the ATP binding site. An L-serine-binding site is contributed by glutamate 284. ATP is bound at residue 348–351 (EISS). Residue serine 384 coordinates L-serine.

It belongs to the class-II aminoacyl-tRNA synthetase family. Type-1 seryl-tRNA synthetase subfamily. In terms of assembly, homodimer. The tRNA molecule binds across the dimer.

It localises to the cytoplasm. The enzyme catalyses tRNA(Ser) + L-serine + ATP = L-seryl-tRNA(Ser) + AMP + diphosphate + H(+). The catalysed reaction is tRNA(Sec) + L-serine + ATP = L-seryl-tRNA(Sec) + AMP + diphosphate + H(+). It functions in the pathway aminoacyl-tRNA biosynthesis; selenocysteinyl-tRNA(Sec) biosynthesis; L-seryl-tRNA(Sec) from L-serine and tRNA(Sec): step 1/1. Functionally, catalyzes the attachment of serine to tRNA(Ser). Is also able to aminoacylate tRNA(Sec) with serine, to form the misacylated tRNA L-seryl-tRNA(Sec), which will be further converted into selenocysteinyl-tRNA(Sec). The chain is Serine--tRNA ligase from Sphingopyxis alaskensis (strain DSM 13593 / LMG 18877 / RB2256) (Sphingomonas alaskensis).